Here is a 785-residue protein sequence, read N- to C-terminus: Phosphoinositide phosphatase SAC5 (785 aa).

The SAC domain maps to 158-533 (LSVVDLSKNF…GNTLAMQYGG (376 aa)). Residues 469-480 (RTNCIDCLDRTN) carry the Phosphatase catalytic core motif. The segment covering 688-700 (GSGQMFQGSSSNS) has biased composition (polar residues). Residues 688–707 (GSGQMFQGSSSNSDSHRPND) are disordered.

In terms of assembly, component of the PI(3,5)P2 regulatory complex at least composed of ATG18, SAC/FIG4, FAB1 and VAC14. The cofactor is Mg(2+). As to expression, ubiquitous with a higher level of expression in young seedlings than in other tissues.

The protein localises to the vacuole membrane. The enzyme catalyses a 1,2-diacyl-sn-glycero-3-phospho-(1D-myo-inositol-3,5-bisphosphate) + H2O = a 1,2-diacyl-sn-glycero-3-phospho-(1D-myo-inositol-3-phosphate) + phosphate. Its function is as follows. The PI(3,5)P2 regulatory complex regulates both the synthesis and turnover of phosphatidylinositol 3,5-bisphosphate (PtdIns(3,5)P2). This Arabidopsis thaliana (Mouse-ear cress) protein is Phosphoinositide phosphatase SAC5 (SAC5).